A 215-amino-acid polypeptide reads, in one-letter code: MSADRHYSPIDRFLLQADSALRTLLPFSGQPARPSPAIVEPDGELSEEDTRHIAGLMRINHTGEVCAQALYQGQSLTARLPEVREAMEEAAEEEIDHLAWCEQRIRQLGSRPSVLNPIFYGLSFGVGAAAGLVSDRVSLGFVAATEDQVCKHLDEHLAQIPQEDRKSRAILEQMRVDEEQHSSNALAAGGLRFPAPVKLGMSLLAKVMTKSTYRI.

Fe cation-binding residues include glutamate 64, glutamate 94, histidine 97, glutamate 146, glutamate 178, and histidine 181.

Belongs to the COQ7 family. Fe cation serves as cofactor.

It localises to the cell membrane. The catalysed reaction is a 5-methoxy-2-methyl-3-(all-trans-polyprenyl)benzene-1,4-diol + AH2 + O2 = a 3-demethylubiquinol + A + H2O. It participates in cofactor biosynthesis; ubiquinone biosynthesis. Catalyzes the hydroxylation of 2-nonaprenyl-3-methyl-6-methoxy-1,4-benzoquinol during ubiquinone biosynthesis. This is 3-demethoxyubiquinol 3-hydroxylase from Pseudomonas paraeruginosa (strain DSM 24068 / PA7) (Pseudomonas aeruginosa (strain PA7)).